The following is a 198-amino-acid chain: Ribosome maturation factor RimP (198 aa).

The protein belongs to the RimP family.

It is found in the cytoplasm. In terms of biological role, required for maturation of 30S ribosomal subunits. In Agrobacterium fabrum (strain C58 / ATCC 33970) (Agrobacterium tumefaciens (strain C58)), this protein is Ribosome maturation factor RimP.